A 128-amino-acid polypeptide reads, in one-letter code: Large ribosomal subunit protein bL12 (128 aa).

Belongs to the bacterial ribosomal protein bL12 family. As to quaternary structure, homodimer. Part of the ribosomal stalk of the 50S ribosomal subunit. Forms a multimeric L10(L12)X complex, where L10 forms an elongated spine to which 2 to 4 L12 dimers bind in a sequential fashion. Binds GTP-bound translation factors.

Forms part of the ribosomal stalk which helps the ribosome interact with GTP-bound translation factors. Is thus essential for accurate translation. This chain is Large ribosomal subunit protein bL12, found in Kocuria rhizophila (strain ATCC 9341 / DSM 348 / NBRC 103217 / DC2201).